Reading from the N-terminus, the 448-residue chain is Ribosomal protein uS12 methylthiotransferase RimO (448 aa).

The region spanning 16–126 (PRISFVSLGC…VVAAVHEAVP (111 aa)) is the MTTase N-terminal domain. [4Fe-4S] cluster-binding residues include cysteine 25, cysteine 61, cysteine 90, cysteine 157, cysteine 161, and cysteine 164. The region spanning 143-380 (LTPRHYAYLK…MEAQAGVSLK (238 aa)) is the Radical SAM core domain. The TRAM domain maps to 383-448 (RAKVGKRLQV…DAYDLHGIAV (66 aa)).

This sequence belongs to the methylthiotransferase family. RimO subfamily. [4Fe-4S] cluster serves as cofactor.

It is found in the cytoplasm. It catalyses the reaction L-aspartate(89)-[ribosomal protein uS12]-hydrogen + (sulfur carrier)-SH + AH2 + 2 S-adenosyl-L-methionine = 3-methylsulfanyl-L-aspartate(89)-[ribosomal protein uS12]-hydrogen + (sulfur carrier)-H + 5'-deoxyadenosine + L-methionine + A + S-adenosyl-L-homocysteine + 2 H(+). Its function is as follows. Catalyzes the methylthiolation of an aspartic acid residue of ribosomal protein uS12. The protein is Ribosomal protein uS12 methylthiotransferase RimO of Methylorubrum populi (strain ATCC BAA-705 / NCIMB 13946 / BJ001) (Methylobacterium populi).